A 198-amino-acid chain; its full sequence is MAEKQTAKRNRREEILQSLALMLESSDGSQRITTAKLAASVGVSEAALYRHFPSKTRMFDSLIEFIEDSLITRINLILKDEKDTTARLRLIVLLLLGFGERNPGLTRILTGHALMFEQDRLQGRINQLFERIEAQLRQVLREKRMREGEGYTTDETLLASQLLAFCEGMLSRFVRSEFKYRPTDDFDARWPLIAAQLQ.

Positions 10 to 70 (NRREEILQSL…SLIEFIEDSL (61 aa)) constitute an HTH tetR-type domain. The H-T-H motif DNA-binding region spans 33 to 52 (TTAKLAASVGVSEAALYRHF). The stretch at 117-144 (EQDRLQGRINQLFERIEAQLRQVLREKR) forms a coiled coil.

The protein belongs to the nucleoid occlusion factor SlmA family. Homodimer. Interacts with FtsZ.

It localises to the cytoplasm. It is found in the nucleoid. Its function is as follows. Required for nucleoid occlusion (NO) phenomenon, which prevents Z-ring formation and cell division over the nucleoid. Acts as a DNA-associated cell division inhibitor that binds simultaneously chromosomal DNA and FtsZ, and disrupts the assembly of FtsZ polymers. SlmA-DNA-binding sequences (SBS) are dispersed on non-Ter regions of the chromosome, preventing FtsZ polymerization at these regions. The polypeptide is Nucleoid occlusion factor SlmA (Escherichia coli O127:H6 (strain E2348/69 / EPEC)).